We begin with the raw amino-acid sequence, 32 residues long: MSDIN-like toxin proprotein 1 (32 aa).

The propeptide occupies 1-10 (MSDINATCLP). Residues 11–17 (AWLALCP) constitute a cross-link (cyclopeptide (Ala-Pro)). A propeptide spanning residues 18–32 (CVGDDVNPTLTRGGT) is cleaved from the precursor.

This sequence belongs to the MSDIN fungal toxin family. Processed by the macrocyclase-peptidase enzyme POPB to yield a toxic cyclic heptapeptide. POPB first removes 10 residues from the N-terminus. Conformational trapping of the remaining peptide forces the enzyme to release this intermediate rather than proceed to macrocyclization. The enzyme rebinds the remaining peptide in a different conformation and catalyzes macrocyclization of the N-terminal 7 residues.

Probable toxin that belongs to the MSDIN-like toxin family responsible for a large number of food poisoning cases and deaths. This chain is MSDIN-like toxin proprotein 1, found in Amanita fuligineoides.